The following is a 172-amino-acid chain: Peptide methionine sulfoxide reductase MsrA (172 aa).

Residue Cys12 is part of the active site.

This sequence belongs to the MsrA Met sulfoxide reductase family.

It catalyses the reaction L-methionyl-[protein] + [thioredoxin]-disulfide + H2O = L-methionyl-(S)-S-oxide-[protein] + [thioredoxin]-dithiol. It carries out the reaction [thioredoxin]-disulfide + L-methionine + H2O = L-methionine (S)-S-oxide + [thioredoxin]-dithiol. Functionally, has an important function as a repair enzyme for proteins that have been inactivated by oxidation. Catalyzes the reversible oxidation-reduction of methionine sulfoxide in proteins to methionine. The sequence is that of Peptide methionine sulfoxide reductase MsrA from Ligilactobacillus salivarius (strain UCC118) (Lactobacillus salivarius).